Here is a 590-residue protein sequence, read N- to C-terminus: Glutathione S-transferase T3 (590 aa).

Residues 1–82 form the GST N-terminal domain; it reads MKLKVYADRM…YLSSAYPSVV (82 aa). Glutathione-binding positions include 11–12, 40–41, 53–54, and 66–67; these read SQ, QL, KV, and ES. A GST C-terminal domain is found at 89–232; sequence DLSKRARIHS…KDRCQKQREM (144 aa). The 72-residue stretch at 265–336 folds into the Myb-like domain; it reads DRRKHRRKWS…HCKQRWSKLN (72 aa). A disordered region spans residues 402 to 427; that stretch reads SKGGGSSKRTKLNNGDRVYSSSSNPE.

Belongs to the GST superfamily. Theta family.

It is found in the nucleus. The enzyme catalyses RX + glutathione = an S-substituted glutathione + a halide anion + H(+). Its function is as follows. May be involved in the conjugation of reduced glutathione to a wide number of exogenous and endogenous hydrophobic electrophiles and have a detoxification role against certain herbicides. This is Glutathione S-transferase T3 (GSTT3) from Arabidopsis thaliana (Mouse-ear cress).